The following is a 268-amino-acid chain: Ribonuclease P protein subunit p30 (268 aa).

Residue Ala2 is modified to N-acetylalanine. A disordered region spans residues 247-268 (KPRPSEGDEDCLPASKKAKCEG). Ser251 is modified (phosphoserine).

It belongs to the eukaryotic/archaeal RNase P protein component 3 family. Component of nuclear RNase P and RNase MRP ribonucleoproteins. RNase P consists of a catalytic RNA moiety and about 10 protein subunits; POP1, POP4, POP5, POP7, RPP14, RPP21, RPP25, RPP30, RPP38 and RPP40. Within the RNase P complex, POP1, POP7 and RPP25 form the 'finger' subcomplex, POP5, RPP14, RPP40 and homodimeric RPP30 form the 'palm' subcomplex, and RPP21, POP4 and RPP38 form the 'wrist' subcomplex. All subunits of the RNase P complex interact with the catalytic RNA. Several subunits of RNase P are also part of the RNase MRP complex. RNase MRP consists of a catalytic RNA moiety and about 8 protein subunits; POP1, POP7, RPP25, RPP30, RPP38, RPP40 and possibly also POP4 and POP5.

The protein resides in the nucleus. Its subcellular location is the nucleolus. In terms of biological role, component of ribonuclease P, a ribonucleoprotein complex that generates mature tRNA molecules by cleaving their 5'-ends. Also a component of the MRP ribonuclease complex, which cleaves pre-rRNA sequences. The protein is Ribonuclease P protein subunit p30 (RPP30) of Homo sapiens (Human).